The following is a 370-amino-acid chain: Translocating chain-associated membrane protein 2 (370 aa).

The Cytoplasmic portion of the chain corresponds to 1–22 (MAFRRRTKSYPLFSQEFIIHNH). The helical transmembrane segment at 23 to 43 (ADIGFCLVLCVLIGLMFEVTA) threads the bilayer. Residues 44-75 (KTAFLFILPQYNISVPTADSETVHYHYGPKDL) lie on the Extracellular side of the membrane. A glycan (N-linked (GlcNAc...) asparagine) is linked at asparagine 55. A helical membrane pass occupies residues 76–96 (VTILFYVVITIIFHAVVQEYI). Residues 97–119 (LDKISKRLHLSKVKHSKFNESGQ) are Cytoplasmic-facing. The TLC domain maps to 112-321 (SKFNESGQLL…HSQLRHWREY (210 aa)). The helical transmembrane segment at 120–140 (LLVFHLSAVAWCFYVIVTEGY) threads the bilayer. Residues 141–159 (LTNPRSLWEDYPHVYLSFQ) are Extracellular-facing. Residues 160-180 (VKFFYLGQLAYWLHSLPELYF) form a helical membrane-spanning segment. The Cytoplasmic portion of the chain corresponds to 181–191 (QKVRKEEVPRQ). Residues 192 to 209 (LQYICLYLLHITGAYLLN) form a helical membrane-spanning segment. The Extracellular segment spans residues 210 to 214 (LSRLG). Residues 215–235 (LILLLLQYSTEALFHMARLFH) traverse the membrane as a helical segment. The Cytoplasmic portion of the chain corresponds to 236 to 250 (FADENNERLFNAWAA). The helical transmembrane segment at 251–271 (VFGVTRLFILTLAVLTIGFGL) threads the bilayer. The Extracellular portion of the chain corresponds to 272 to 287 (ARVENQVFDPEKGNFN). A helical transmembrane segment spans residues 288–308 (TLPCRLGMLLLVCVAQAWLMW). Topologically, residues 309 to 370 (RFIHSQLRHW…SSRTKKLKSP (62 aa)) are cytoplasmic. A disordered region spans residues 332-370 (SAVPRPPAKLLKREPGYHENGVVKAENGTSSRTKKLKSP).

The protein belongs to the TRAM family. In terms of assembly, interacts with COL1A1. Interacts with SERCA2B.

It localises to the membrane. Necessary for collagen type I synthesis. May couple the activity of the ER Ca(2+) pump SERCA2B with the activity of the translocon. This coupling may increase the local Ca(2+) concentration at the site of collagen synthesis, and a high Ca(2+) concentration may be necessary for the function of molecular chaperones involved in collagen folding. Required for proper insertion of the first transmembrane helix N-terminus of TM4SF20 into the ER lumen, may act as a ceramide sensor for regulated alternative translocation (RAT). The polypeptide is Translocating chain-associated membrane protein 2 (Tram2) (Mus musculus (Mouse)).